The sequence spans 312 residues: Non-structural protein 12A (312 aa).

Low complexity predominate over residues 1–23 (MFKSGSGSLKRSGSISSVKSFSG). Disordered stretches follow at residues 1–37 (MFKSGSGSLKRSGSISSVKSFSGDSEKGLPPISRGSV), 62–99 (FVPEKTKSEGNLKDKSSVITGNFGSSGPINAHTNQNAD), and 111–161 (ESSK…GTGD). Positions 63-77 (VPEKTKSEGNLKDKS) are enriched in basic and acidic residues. Over residues 78-98 (SVITGNFGSSGPINAHTNQNA) the composition is skewed to polar residues. Residues 122–134 (DARHTATDSRLSQ) are compositionally biased toward basic and acidic residues.

The protein belongs to the phytoreovirus non-structural protein Pns12A family.

It localises to the host cytoplasm. Constituent of viral factories. Binds to ssRNA and dsRNA. The chain is Non-structural protein 12A from Alopecurus aequalis (Barnyard grass).